Here is a 138-residue protein sequence, read N- to C-terminus: Cysteine desulfuration protein SufE (138 aa).

The active-site Cysteine persulfide intermediate is the cysteine 51.

It belongs to the SufE family. As to quaternary structure, homodimer. Interacts with SufS.

It localises to the cytoplasm. Its pathway is cofactor biosynthesis; iron-sulfur cluster biosynthesis. Participates in cysteine desulfuration mediated by SufS. Cysteine desulfuration mobilizes sulfur from L-cysteine to yield L-alanine and constitutes an essential step in sulfur metabolism for biosynthesis of a variety of sulfur-containing biomolecules. Functions as a sulfur acceptor for SufS, by mediating the direct transfer of the sulfur atom from the S-sulfanylcysteine of SufS, an intermediate product of cysteine desulfuration process. This Citrobacter koseri (strain ATCC BAA-895 / CDC 4225-83 / SGSC4696) protein is Cysteine desulfuration protein SufE.